The chain runs to 152 residues: Superoxide dismutase [Cu-Zn] (152 aa).

Residues H45, H47, and H62 each contribute to the Cu cation site. An intrachain disulfide couples C56 to C145. Residues H62, H70, H79, and D82 each contribute to the Zn(2+) site. Residue H119 participates in Cu cation binding.

It belongs to the Cu-Zn superoxide dismutase family. In terms of assembly, homodimer. It depends on Cu cation as a cofactor. Zn(2+) is required as a cofactor.

The protein localises to the cytoplasm. It carries out the reaction 2 superoxide + 2 H(+) = H2O2 + O2. Its function is as follows. Destroys radicals which are normally produced within the cells and which are toxic to biological systems. In Ipomoea batatas (Sweet potato), this protein is Superoxide dismutase [Cu-Zn] (SODCC).